The following is a 1057-amino-acid chain: Carbamoyl phosphate synthase large chain (1057 aa).

Residues 1–401 (MPKRNDIKTI…SLLKAIRSLE (401 aa)) form a carboxyphosphate synthetic domain region. 12 residues coordinate ATP: arginine 129, arginine 169, glycine 175, glycine 176, lysine 208, isoleucine 210, glutamate 215, glycine 241, isoleucine 242, histidine 243, glutamine 284, and glutamate 298. Residues 133–327 (RTLMNDLNVP…IAKLAAKIAV (195 aa)) enclose the ATP-grasp 1 domain. Mg(2+) is bound by residues glutamine 284, glutamate 298, and asparagine 300. Residues glutamine 284, glutamate 298, and asparagine 300 each contribute to the Mn(2+) site. Residues 402-546 (YGVHHLGLPN…YGTYETENES (145 aa)) are oligomerization domain. The interval 547–929 (IVTDKEKILV…ALFKGLTGSG (383 aa)) is carbamoyl phosphate synthetic domain. The region spanning 671-861 (EALLRKINVP…MAQLAMRAII (191 aa)) is the ATP-grasp 2 domain. 10 residues coordinate ATP: arginine 707, arginine 746, leucine 748, glutamate 752, glycine 777, valine 778, histidine 779, serine 780, glutamine 820, and glutamate 832. Mg(2+)-binding residues include glutamine 820, glutamate 832, and asparagine 834. Residues glutamine 820, glutamate 832, and asparagine 834 each coordinate Mn(2+). Residues 930–1057 (VEVKDHGTVL…ESMTFTMRQM (128 aa)) enclose the MGS-like domain. Residues 930–1057 (VEVKDHGTVL…ESMTFTMRQM (128 aa)) are allosteric domain.

This sequence belongs to the CarB family. As to quaternary structure, composed of two chains; the small (or glutamine) chain promotes the hydrolysis of glutamine to ammonia, which is used by the large (or ammonia) chain to synthesize carbamoyl phosphate. Tetramer of heterodimers (alpha,beta)4. It depends on Mg(2+) as a cofactor. The cofactor is Mn(2+).

It carries out the reaction hydrogencarbonate + L-glutamine + 2 ATP + H2O = carbamoyl phosphate + L-glutamate + 2 ADP + phosphate + 2 H(+). It catalyses the reaction hydrogencarbonate + NH4(+) + 2 ATP = carbamoyl phosphate + 2 ADP + phosphate + 2 H(+). It participates in amino-acid biosynthesis; L-arginine biosynthesis; carbamoyl phosphate from bicarbonate: step 1/1. The protein operates within pyrimidine metabolism; UMP biosynthesis via de novo pathway; (S)-dihydroorotate from bicarbonate: step 1/3. Large subunit of the glutamine-dependent carbamoyl phosphate synthetase (CPSase). CPSase catalyzes the formation of carbamoyl phosphate from the ammonia moiety of glutamine, carbonate, and phosphate donated by ATP, constituting the first step of 2 biosynthetic pathways, one leading to arginine and/or urea and the other to pyrimidine nucleotides. The large subunit (synthetase) binds the substrates ammonia (free or transferred from glutamine from the small subunit), hydrogencarbonate and ATP and carries out an ATP-coupled ligase reaction, activating hydrogencarbonate by forming carboxy phosphate which reacts with ammonia to form carbamoyl phosphate. The polypeptide is Carbamoyl phosphate synthase large chain (Staphylococcus aureus (strain USA300 / TCH1516)).